The chain runs to 207 residues: Urease accessory protein UreG (207 aa).

Glycine 14 to threonine 21 contributes to the GTP binding site.

The protein belongs to the SIMIBI class G3E GTPase family. UreG subfamily. As to quaternary structure, homodimer. UreD, UreF and UreG form a complex that acts as a GTP-hydrolysis-dependent molecular chaperone, activating the urease apoprotein by helping to assemble the nickel containing metallocenter of UreC. The UreE protein probably delivers the nickel.

Its subcellular location is the cytoplasm. Functionally, facilitates the functional incorporation of the urease nickel metallocenter. This process requires GTP hydrolysis, probably effectuated by UreG. This Pseudomonas putida (strain GB-1) protein is Urease accessory protein UreG.